We begin with the raw amino-acid sequence, 322 residues long: tRNA dimethylallyltransferase (322 aa).

ATP is bound at residue Gly19–Thr26. Substrate is bound at residue Thr21–Thr26. 3 interaction with substrate tRNA regions span residues Asp44 to Leu47, Gln168 to Arg172, and Arg255 to Arg260.

Belongs to the IPP transferase family. As to quaternary structure, monomer. Requires Mg(2+) as cofactor.

It catalyses the reaction adenosine(37) in tRNA + dimethylallyl diphosphate = N(6)-dimethylallyladenosine(37) in tRNA + diphosphate. Catalyzes the transfer of a dimethylallyl group onto the adenine at position 37 in tRNAs that read codons beginning with uridine, leading to the formation of N6-(dimethylallyl)adenosine (i(6)A). The chain is tRNA dimethylallyltransferase from Cupriavidus necator (strain ATCC 17699 / DSM 428 / KCTC 22496 / NCIMB 10442 / H16 / Stanier 337) (Ralstonia eutropha).